The following is a 140-amino-acid chain: MSFFVQKLSEKATIPTKGSANSAGYDLYAAAECIVPRRGKVLVDTDLAIAVPEGTYGRVAPRSGLASKHSIDTGAGVIDADYRGHVRVLLFNYSDVDFPIKVGDRIAQLILERIVNPPVILVESLEATVRGANGFGSTGV.

Substrate is bound by residues 62-64, 76-79, Arg130, and 135-136; these read RSG, GVID, and FG.

This sequence belongs to the dUTPase family. Homotrimer. The cofactor is Mg(2+).

The catalysed reaction is dUTP + H2O = dUMP + diphosphate + H(+). Its pathway is pyrimidine metabolism; dUMP biosynthesis; dUMP from dCTP (dUTP route): step 2/2. This enzyme is involved in nucleotide metabolism: it produces dUMP, the immediate precursor of thymidine nucleotides and it decreases the intracellular concentration of dUTP so that uracil cannot be incorporated into DNA. This is Probable deoxyuridine 5'-triphosphate nucleotidohydrolase from Schizosaccharomyces pombe (strain 972 / ATCC 24843) (Fission yeast).